The primary structure comprises 70 residues: Protein SlyX homolog (70 aa).

The protein belongs to the SlyX family.

This chain is Protein SlyX homolog, found in Shewanella denitrificans (strain OS217 / ATCC BAA-1090 / DSM 15013).